The primary structure comprises 587 residues: 2-succinyl-5-enolpyruvyl-6-hydroxy-3-cyclohexene-1-carboxylate synthase (587 aa).

Belongs to the TPP enzyme family. MenD subfamily. In terms of assembly, homodimer. Requires Mg(2+) as cofactor. Mn(2+) serves as cofactor. The cofactor is thiamine diphosphate.

It catalyses the reaction isochorismate + 2-oxoglutarate + H(+) = 5-enolpyruvoyl-6-hydroxy-2-succinyl-cyclohex-3-ene-1-carboxylate + CO2. The protein operates within quinol/quinone metabolism; 1,4-dihydroxy-2-naphthoate biosynthesis; 1,4-dihydroxy-2-naphthoate from chorismate: step 2/7. It functions in the pathway cofactor biosynthesis; phylloquinone biosynthesis. Its function is as follows. Catalyzes the thiamine diphosphate-dependent decarboxylation of 2-oxoglutarate and the subsequent addition of the resulting succinic semialdehyde-thiamine pyrophosphate anion to isochorismate to yield 2-succinyl-5-enolpyruvyl-6-hydroxy-3-cyclohexene-1-carboxylate (SEPHCHC). This is 2-succinyl-5-enolpyruvyl-6-hydroxy-3-cyclohexene-1-carboxylate synthase from Prochlorococcus marinus (strain MIT 9301).